We begin with the raw amino-acid sequence, 449 residues long: Glutamyl-tRNA reductase (449 aa).

Substrate is bound by residues 58–61, serine 121, 126–128, and glutamine 132; these read TCNR and ETQ. The active-site Nucleophile is cysteine 59. 203-208 is an NADP(+) binding site; the sequence is GLGEMA.

This sequence belongs to the glutamyl-tRNA reductase family. Homodimer.

It catalyses the reaction (S)-4-amino-5-oxopentanoate + tRNA(Glu) + NADP(+) = L-glutamyl-tRNA(Glu) + NADPH + H(+). The protein operates within porphyrin-containing compound metabolism; protoporphyrin-IX biosynthesis; 5-aminolevulinate from L-glutamyl-tRNA(Glu): step 1/2. Catalyzes the NADPH-dependent reduction of glutamyl-tRNA(Glu) to glutamate 1-semialdehyde (GSA). This chain is Glutamyl-tRNA reductase, found in Helicobacter pylori (strain ATCC 700392 / 26695) (Campylobacter pylori).